Here is a 398-residue protein sequence, read N- to C-terminus: 4-hydroxy-3-methylbut-2-enyl diphosphate reductase (398 aa).

Cys66 provides a ligand contact to [4Fe-4S] cluster. (2E)-4-hydroxy-3-methylbut-2-enyl diphosphate is bound at residue His96. His96 is a binding site for dimethylallyl diphosphate. His96 contacts isopentenyl diphosphate. Cys157 contributes to the [4Fe-4S] cluster binding site. Position 185 (His185) interacts with (2E)-4-hydroxy-3-methylbut-2-enyl diphosphate. Residue His185 coordinates dimethylallyl diphosphate. His185 lines the isopentenyl diphosphate pocket. Glu187 (proton donor) is an active-site residue. Thr250 contributes to the (2E)-4-hydroxy-3-methylbut-2-enyl diphosphate binding site. Cys288 contacts [4Fe-4S] cluster. (2E)-4-hydroxy-3-methylbut-2-enyl diphosphate is bound by residues Ser317, Ser318, Asn319, and Ser380. Dimethylallyl diphosphate-binding residues include Ser317, Ser318, Asn319, and Ser380. Isopentenyl diphosphate-binding residues include Ser317, Ser318, Asn319, and Ser380.

This sequence belongs to the IspH family. The cofactor is [4Fe-4S] cluster.

The enzyme catalyses isopentenyl diphosphate + 2 oxidized [2Fe-2S]-[ferredoxin] + H2O = (2E)-4-hydroxy-3-methylbut-2-enyl diphosphate + 2 reduced [2Fe-2S]-[ferredoxin] + 2 H(+). It catalyses the reaction dimethylallyl diphosphate + 2 oxidized [2Fe-2S]-[ferredoxin] + H2O = (2E)-4-hydroxy-3-methylbut-2-enyl diphosphate + 2 reduced [2Fe-2S]-[ferredoxin] + 2 H(+). It functions in the pathway isoprenoid biosynthesis; dimethylallyl diphosphate biosynthesis; dimethylallyl diphosphate from (2E)-4-hydroxy-3-methylbutenyl diphosphate: step 1/1. It participates in isoprenoid biosynthesis; isopentenyl diphosphate biosynthesis via DXP pathway; isopentenyl diphosphate from 1-deoxy-D-xylulose 5-phosphate: step 6/6. Functionally, catalyzes the conversion of 1-hydroxy-2-methyl-2-(E)-butenyl 4-diphosphate (HMBPP) into a mixture of isopentenyl diphosphate (IPP) and dimethylallyl diphosphate (DMAPP). Acts in the terminal step of the DOXP/MEP pathway for isoprenoid precursor biosynthesis. The sequence is that of 4-hydroxy-3-methylbut-2-enyl diphosphate reductase from Prochlorococcus marinus (strain MIT 9515).